The chain runs to 454 residues: tRNA modification GTPase MnmE (454 aa).

(6S)-5-formyl-5,6,7,8-tetrahydrofolate-binding residues include Arg23, Glu86, and Arg125. Residues 221 to 376 (GLTLAIVGRP…LREQILRMVS (156 aa)) enclose the TrmE-type G domain. Asn231 contacts K(+). GTP is bound by residues 231–236 (NVGKSS), 250–256 (TAIPGTT), and 275–278 (DTAG). Ser235 contacts Mg(2+). K(+) is bound by residues Thr250, Ile252, and Thr255. Thr256 is a Mg(2+) binding site. Lys454 is a binding site for (6S)-5-formyl-5,6,7,8-tetrahydrofolate.

This sequence belongs to the TRAFAC class TrmE-Era-EngA-EngB-Septin-like GTPase superfamily. TrmE GTPase family. In terms of assembly, homodimer. Heterotetramer of two MnmE and two MnmG subunits. Requires K(+) as cofactor.

The protein localises to the cytoplasm. In terms of biological role, exhibits a very high intrinsic GTPase hydrolysis rate. Involved in the addition of a carboxymethylaminomethyl (cmnm) group at the wobble position (U34) of certain tRNAs, forming tRNA-cmnm(5)s(2)U34. The polypeptide is tRNA modification GTPase MnmE (Koribacter versatilis (strain Ellin345)).